The primary structure comprises 1125 residues: Telomerase reverse transcriptase (1125 aa).

The segment at 1–234 is RNA-interacting domain 1; it reads MPRAPRCRAV…ARRRRSSARG (234 aa). Residues 58–199 form a GQ motif region; that stretch reads VPWDAQPPPA…RQVGGTRAGF (142 aa). Residues 137–141 are required for regulating specificity for telomeric DNA and for processivity for primer elongation; that stretch reads WGLLL. Positions 186-308 are disordered; that stretch reads RRPTRQVGGT…WRLSPSEGEP (123 aa). The segment covering 224-243 has biased composition (basic residues); the sequence is GARRRRSSARGRLPPAKRPR. The Bipartite nuclear localization signal motif lies at 226–244; sequence RRRRSSARGRLPPAKRPRR. The residue at position 231 (Ser-231) is a Phosphoserine; by PKB/AKT1. The interval 235 to 312 is linker; the sequence is RLPPAKRPRR…PSEGEPGAGA (78 aa). Composition is skewed to basic and acidic residues over residues 244–253 and 269–279; these read RGLEPGRDLE and DAAEAKSRKGD. The segment at 290 to 531 is required for oligomerization; the sequence is GERGVGSASW…VPAAEHRQRE (242 aa). Residues 313 to 543 form an RNA-interacting domain 2 region; it reads CAETKRFLYC…LGRFLHWLMG (231 aa). The TFLY; involved in RNA binding signature appears at 316-321; sequence TKRFLY. Residues 364-514 form a QFP motif region; the sequence is PRRPRRLPAR…MKVQDCAWLR (151 aa). The segment at 385–405 is CP motif; it reads LGNHARSPYGALLRAHCPLPA. Position 450 is a phosphoserine; by DYRK2 (Ser-450). One can recognise a Reverse transcriptase domain in the interval 598-928; it reads EVRQHQEARP…CLFPWCGLLL (331 aa). Position 700 is a phosphotyrosine; by SRC-type Tyr-kinases (Tyr-700). Mg(2+) contacts are provided by Asp-705, Asp-861, and Asp-862. The required for oligomerization stretch occupies residues 907 to 921; it reads LGGAAPLQLPAHCLF. The interval 923–927 is primer grip sequence; it reads WCGLL. The tract at residues 929 to 1125 is CTE; that stretch reads DTRTLEVHGD…LTADFKTILD (197 aa).

It belongs to the reverse transcriptase family. Telomerase subfamily. In terms of assembly, catalytic component of the telomerase holoenzyme complex composed of one molecule of TERT, one molecule of WRAP53/TCAB1, two molecules of H/ACA ribonucleoprotein complex subunits DKC1, NOP10, NHP2 and GAR1, and a telomerase RNA template component (TERC). The telomerase holoenzyme complex is associated with TEP1, SMG6/EST1A and POT1. The molecular chaperone HSP90/P23 complex is required for correct assembly and stabilization of the active telomerase. Interacts directly with HSP90A and PTGES3. Interacts with HSPA1A; the interaction occurs in the absence of TERC and dissociates once the complex has formed. Interacts with RAN; the interaction promotes nuclear export of TERT. Interacts with XPO1. Interacts with PTPN11; the interaction retains TERT in the nucleus. Interacts with NCL (via RRM1 and C-terminal RRM4/Arg/Gly-rich domains); the interaction is important for nucleolar localization of TERT. Interacts with SMARCA4 (via the bromodomain); the interaction regulates Wnt-mediated signaling. Interacts with MCRS1 (isoform MCRS2); the interaction inhibits in vitro telomerase activity. Interacts with PIF1; the interaction has no effect on the elongation activity of TERT. Interacts with PML; the interaction recruits TERT to PML bodies and inhibits telomerase activity. Interacts with GNL3L. Interacts with isoform 1 and isoform 2 of NVL. Interacts with DHX36. Interacts with ATF7. Phosphorylation at Tyr-700 under oxidative stress leads to translocation of TERT to the cytoplasm and reduces its antiapoptotic activity. Dephosphorylated by SHP2/PTPN11 leading to nuclear retention. Phosphorylation at Ser-231 by the AKT pathway promotes nuclear location. Phosphorylation at the G2/M phase at Ser-450 by DYRK2 promotes ubiquitination by the EDVP complex and degradation. In terms of processing, ubiquitinated by the EDVP complex, a E3 ligase complex following phosphorylation at Ser-450 by DYRK2. Ubiquitinated leads to proteasomal degradation.

Its subcellular location is the nucleus. The protein resides in the nucleolus. It is found in the nucleoplasm. It localises to the chromosome. The protein localises to the telomere. Its subcellular location is the cytoplasm. The protein resides in the PML body. It carries out the reaction DNA(n) + a 2'-deoxyribonucleoside 5'-triphosphate = DNA(n+1) + diphosphate. Functionally, telomerase is a ribonucleoprotein enzyme essential for the replication of chromosome termini in most eukaryotes. Active in progenitor and cancer cells. Inactive, or very low activity, in normal somatic cells. Catalytic component of the teleromerase holoenzyme complex whose main activity is the elongation of telomeres by acting as a reverse transcriptase that adds simple sequence repeats to chromosome ends by copying a template sequence within the RNA component of the enzyme. Catalyzes the RNA-dependent extension of 3'-chromosomal termini with the 6-nucleotide telomeric repeat unit, 5'-TTAGGG-3'. The catalytic cycle involves primer binding, primer extension and release of product once the template boundary has been reached or nascent product translocation followed by further extension. More active on substrates containing 2 or 3 telomeric repeats. Telomerase activity is regulated by a number of factors including telomerase complex-associated proteins, chaperones and polypeptide modifiers. Modulates Wnt signaling. Plays important roles in aging and antiapoptosis. The chain is Telomerase reverse transcriptase (TERT) from Bos taurus (Bovine).